The sequence spans 852 residues: MGMCSRQERIQKDIDVVIQKSRAEKDCLFADFRYSDSTFTFTYVGGPKSVSYSVHVSEDYPDNTYVSSSENDEDVLVTTDPIPVIFHRIATELRKTNDINCCLSIRSKLQKENGEESRQNSTVEEDSEGDNDSEEFYYGGQVNYDGELHKHPQLEADLSAVRELYGPHAVSLREYGAIDDVDIDLHIDVSFLDEEIAVAWEVIRTEPIIVRLHCSLTQYLNGPVPTVDVFQISTKERFGLGHQLKKIMQTFVSQQWKQSKDKSNCPHGKKLSEKKVKSPLHLFSTLRRSPSYPPPGCGKSKSKLKPEQDGISKTHKLLRRTCSSTVKADDMCAKSHRTFGRSLSSDPRAEQAMSTIKSHKLLGRPCPSAGKQEDCLTLKSHKLLTRSCSGDPRCEHNTNLKPHKLLSRSYSSNLRMEELYGLKNHKLLSKSYSSAPKTSKMEHFKEPNAEGRRLSLTSGLIGILTPSSSSSQPPTNGAKSIPIRDRGFLVQTIEFAEQRIPVLNEYCVVCDEPHVFQNGPMLRPTVCERELCVFAFQTLGVMNEAADEIATGAQVVDLLVSMCRSALESPRKVVIFEPYPSVVDPNDPQMLAFNPRKKNYDRVMKALDSITSIREMTQAPYLEIKKQMDKQDPLAHPLLQWVISSNRSHIVKLPVNRQLKFMHTPHQFLLLSSPPAKESNFRAAKKLFGSTFAFHGSHIENWHSILRNGLVVASNTRLQLHGAMYGSGIYLSPMSSISFGYSGMNKKQKVSSKDEPASSSKSSNASQSQKKGQQSQFLQSRNLKCIALCEVITSPDLHKHGEIWVVPNTDHVCTRFFFVYEDGQVGDANINTQEGGIHKEILRVIGNQTATG.

2 disordered regions span residues 113-134 (NGEE…NDSE) and 289-310 (SPSY…EQDG). Residues 123-134 (VEEDSEGDNDSE) show a composition bias toward acidic residues. ADP-ribosylcysteine is present on residues Cys-332, Cys-366, Cys-375, and Cys-394. Residues 615 to 842 (EMTQAPYLEI…QEGGIHKEIL (228 aa)) enclose the PARP catalytic domain. Residues 748-775 (QKVSSKDEPASSSKSSNASQSQKKGQQS) are disordered. Over residues 757–775 (ASSSKSSNASQSQKKGQQS) the composition is skewed to low complexity.

The protein belongs to the ARTD/PARP family. Post-translationally, auto-mono-ADP-ribosylated.

The catalysed reaction is L-cysteinyl-[protein] + NAD(+) = S-(ADP-D-ribosyl)-L-cysteinyl-[protein] + nicotinamide + H(+). Mono-ADP-ribosyltransferase that mediates mono-ADP-ribosylation of target proteins. This is Protein mono-ADP-ribosyltransferase PARP8 from Mus musculus (Mouse).